The sequence spans 239 residues: Uridylate kinase (239 aa).

13–16 (KVSG) is a binding site for ATP. UMP is bound at residue Gly-55. ATP contacts are provided by Gly-56 and Arg-60. Residues Asp-75 and 136–143 (TGNPFFTT) contribute to the UMP site. ATP-binding residues include Thr-163, Gln-164, Tyr-169, and Asp-172.

The protein belongs to the UMP kinase family. In terms of assembly, homohexamer.

Its subcellular location is the cytoplasm. It catalyses the reaction UMP + ATP = UDP + ADP. The protein operates within pyrimidine metabolism; CTP biosynthesis via de novo pathway; UDP from UMP (UMPK route): step 1/1. Its activity is regulated as follows. Inhibited by UTP. In terms of biological role, catalyzes the reversible phosphorylation of UMP to UDP. The protein is Uridylate kinase of Bartonella bacilliformis (strain ATCC 35685 / KC583 / Herrer 020/F12,63).